The chain runs to 846 residues: Rho GTPase-activating protein 17 (846 aa).

In terms of domain architecture, BAR spans 14–246 (QTVGRAEKTE…MRAHQDKWAE (233 aa)). In terms of domain architecture, Rho-GAP spans 252 to 442 (TPLEEHLKRS…PIIQHADWFF (191 aa)). Residues 459-475 (TPNSNHSSHTGNDSDSG) show a composition bias toward polar residues. The disordered stretch occupies residues 459-482 (TPNSNHSSHTGNDSDSGTLERKRP). Phosphoserine occurs at positions 484 and 575. The disordered stretch occupies residues 519 to 807 (IAPAFQPPLP…ASRIVTDTNS (289 aa)). Positions 592–619 (RNSNQMTTVPNQAQTGGNSHQLSVSTPH) are enriched in polar residues. Over residues 637 to 650 (APAPPKPGNLPPGH) the composition is skewed to pro residues. The span at 653–690 (GQSSPGTGTSPKPSARSPSPPQQQQQQQQQQQQQQQQQ) shows a compositional bias: low complexity. Phosphoserine occurs at positions 698 and 700. Pro residues-rich tracts occupy residues 704 to 717 (IQAP…PPTQ) and 726 to 741 (EPGP…PSTP). Thr-730, Thr-734, and Thr-736 each carry phosphothreonine. The SH3-binding signature appears at 730–743 (TPPQTPTPPSTPPL). Position 739 is a phosphoserine (Ser-739). At Thr-740 the chain carries Phosphothreonine. The segment covering 746–757 (QNPSQSETTQLH) has biased composition (polar residues). The span at 772–782 (RPSVPPPPHPP) shows a compositional bias: pro residues. Residues 791–807 (LTSSVPTASRIVTDTNS) show a composition bias toward polar residues.

In terms of assembly, component of a complex whose core is composed of ARHGAP17, AMOT, PALS1, PATJ and PARD3/PAR3. Interacts with NHERF1, FNBP1, TRIP10, CAPZA (CAPZA1, CAPZA2 or CAPZA3), CAPZB, CD2AP and SH3KBP1/CIN85.

It localises to the membrane. It is found in the cytoplasm. The protein localises to the cell junction. Its subcellular location is the tight junction. Rho GTPase-activating protein involved in the maintenance of tight junction by regulating the activity of CDC42, thereby playing a central role in apical polarity of epithelial cells. Specifically acts as a GTPase activator for the CDC42 GTPase by converting it to an inactive GDP-bound state. The complex formed with AMOT acts by regulating the uptake of polarity proteins at tight junctions, possibly by deciding whether tight junction transmembrane proteins are recycled back to the plasma membrane or sent elsewhere. Participates in the Ca(2+)-dependent regulation of exocytosis, possibly by catalyzing GTPase activity of Rho family proteins and by inducing the reorganization of the cortical actin filaments. Acts as a GTPase activator in vitro for RAC1. In Mus musculus (Mouse), this protein is Rho GTPase-activating protein 17 (Arhgap17).